The following is a 559-amino-acid chain: Polypeptide N-acetylgalactosaminyltransferase 1 (559 aa).

Residues 1–8 (MRKFAYCK) lie on the Cytoplasmic side of the membrane. The helical; Signal-anchor for type II membrane protein transmembrane segment at 9–28 (VVLATSLIWVLLDMFLLLYF) threads the bilayer. Topologically, residues 29 to 559 (SECNKCDEKK…LRNVTLPEIF (531 aa)) are lumenal. The interval 45-66 (GDVLEPVQKPHEGPGEMGKPVV) is disordered. Asn-95 is a glycosylation site (N-linked (GlcNAc...) asparagine). 5 disulfide bridges follow: Cys-106/Cys-339, Cys-330/Cys-408, Cys-442/Cys-459, Cys-482/Cys-497, and Cys-523/Cys-540. Residues 115-225 (LPTTSVVIVF…VGWLEPLLAR (111 aa)) form a catalytic subdomain A region. The substrate site is built by Asp-156 and Arg-186. Mn(2+) is bound by residues Asp-209 and His-211. Positions 285-347 (PVRTPTMAGG…TCSHVGHVFR (63 aa)) are catalytic subdomain B. Trp-316 contributes to the substrate binding site. A Mn(2+)-binding site is contributed by His-344. Substrate contacts are provided by Arg-347 and Tyr-352. The Ricin B-type lectin domain maps to 429–551 (SSLGEIRNVE…GSRSQQWLLR (123 aa)). N-linked (GlcNAc...) asparagine glycosylation is present at Asn-552.

It belongs to the glycosyltransferase 2 family. GalNAc-T subfamily. Mn(2+) is required as a cofactor.

It is found in the golgi apparatus. Its subcellular location is the golgi stack membrane. The protein localises to the secreted. It carries out the reaction L-seryl-[protein] + UDP-N-acetyl-alpha-D-galactosamine = a 3-O-[N-acetyl-alpha-D-galactosaminyl]-L-seryl-[protein] + UDP + H(+). It catalyses the reaction L-threonyl-[protein] + UDP-N-acetyl-alpha-D-galactosamine = a 3-O-[N-acetyl-alpha-D-galactosaminyl]-L-threonyl-[protein] + UDP + H(+). The protein operates within protein modification; protein glycosylation. In terms of biological role, catalyzes the initial reaction in O-linked oligosaccharide biosynthesis, the transfer of an N-acetyl-D-galactosamine residue to a serine or threonine residue on the protein receptor. Has a broad spectrum of substrates such as apomucin-, MUC5AC-, MUC1- and MUC2-derived peptides. This is Polypeptide N-acetylgalactosaminyltransferase 1 from Sus scrofa (Pig).